The following is a 131-amino-acid chain: Small ribosomal subunit protein uS8 (131 aa).

The protein belongs to the universal ribosomal protein uS8 family. Part of the 30S ribosomal subunit. Contacts proteins S5 and S12.

Functionally, one of the primary rRNA binding proteins, it binds directly to 16S rRNA central domain where it helps coordinate assembly of the platform of the 30S subunit. This is Small ribosomal subunit protein uS8 from Mesomycoplasma hyopneumoniae (strain 7448) (Mycoplasma hyopneumoniae).